A 196-amino-acid polypeptide reads, in one-letter code: Cyclin-dependent kinase inhibitor 6 (196 aa).

Disordered stretches follow at residues M1–H36 and A55–P151. The span at S124–A139 shows a compositional bias: low complexity. T152 is modified (phosphothreonine; by KIN10).

It belongs to the CDI family. ICK/KRP subfamily. As to quaternary structure, specifically interacts with CDKA-1, but not with CDKB1-1. Interacts with CYCD1-1, CYCD4-1 and RHF1A. Binds to FBL17. Interacts with KIN10. Interacts with CYCD3-1. In terms of processing, ubiquitinated by RHF1A and SCF(FBL17). Ubiquitination leads to its subsequent degradation, thus controlling cell cycle progression. The phosphorylation at Thr-152 by KIN10 represses its activity. In terms of tissue distribution, expressed in newly formed organs such as the shoot apex. Expressed in cotyledon, primary root and marginal region of the leaves as well as in developing pollen.

The protein resides in the nucleus. The protein localises to the nucleoplasm. Down-regulated by KIN10 under a phosphorylation-dependent manner. Binds and inhibits CYCD2-1/CDKA-1 complex kinase activity. Regulates cell division which is crucial for plant growth, development and morphogenesis. May inhibit CDK kinases specifically involved in the G1/S phase transition. The chain is Cyclin-dependent kinase inhibitor 6 (KRP6) from Arabidopsis thaliana (Mouse-ear cress).